The chain runs to 178 residues: Large ribosomal subunit protein uL5 (178 aa).

This sequence belongs to the universal ribosomal protein uL5 family. As to quaternary structure, part of the 50S ribosomal subunit; part of the 5S rRNA/L5/L18/L25 subcomplex. Contacts the 5S rRNA and the P site tRNA. Forms a bridge to the 30S subunit in the 70S ribosome.

Functionally, this is one of the proteins that bind and probably mediate the attachment of the 5S RNA into the large ribosomal subunit, where it forms part of the central protuberance. In the 70S ribosome it contacts protein S13 of the 30S subunit (bridge B1b), connecting the 2 subunits; this bridge is implicated in subunit movement. Contacts the P site tRNA; the 5S rRNA and some of its associated proteins might help stabilize positioning of ribosome-bound tRNAs. The polypeptide is Large ribosomal subunit protein uL5 (Prochlorococcus marinus subsp. pastoris (strain CCMP1986 / NIES-2087 / MED4)).